A 492-amino-acid polypeptide reads, in one-letter code: 2-succinylbenzoate--CoA ligase (492 aa).

Belongs to the ATP-dependent AMP-binding enzyme family. MenE subfamily.

The catalysed reaction is 2-succinylbenzoate + ATP + CoA = 2-succinylbenzoyl-CoA + AMP + diphosphate. It participates in quinol/quinone metabolism; 1,4-dihydroxy-2-naphthoate biosynthesis; 1,4-dihydroxy-2-naphthoate from chorismate: step 5/7. Its pathway is quinol/quinone metabolism; menaquinone biosynthesis. In terms of biological role, converts 2-succinylbenzoate (OSB) to 2-succinylbenzoyl-CoA (OSB-CoA). The sequence is that of 2-succinylbenzoate--CoA ligase from Staphylococcus aureus (strain MSSA476).